The primary structure comprises 235 residues: Aspartate/glutamate leucyltransferase (235 aa).

Belongs to the R-transferase family. Bpt subfamily.

Its subcellular location is the cytoplasm. It carries out the reaction N-terminal L-glutamyl-[protein] + L-leucyl-tRNA(Leu) = N-terminal L-leucyl-L-glutamyl-[protein] + tRNA(Leu) + H(+). It catalyses the reaction N-terminal L-aspartyl-[protein] + L-leucyl-tRNA(Leu) = N-terminal L-leucyl-L-aspartyl-[protein] + tRNA(Leu) + H(+). Functions in the N-end rule pathway of protein degradation where it conjugates Leu from its aminoacyl-tRNA to the N-termini of proteins containing an N-terminal aspartate or glutamate. This Pseudomonas fluorescens (strain SBW25) protein is Aspartate/glutamate leucyltransferase.